The following is a 356-amino-acid chain: Methionine import ATP-binding protein MetN 1 (356 aa).

Residues 15–254 (IQIRALNKTY…PVQPITQELL (240 aa)) enclose the ABC transporter domain. 51–58 (GKSGAGKS) contacts ATP.

This sequence belongs to the ABC transporter superfamily. Methionine importer (TC 3.A.1.24) family. As to quaternary structure, the complex is composed of two ATP-binding proteins (MetN), two transmembrane proteins (MetI) and a solute-binding protein (MetQ).

Its subcellular location is the cell inner membrane. The catalysed reaction is L-methionine(out) + ATP + H2O = L-methionine(in) + ADP + phosphate + H(+). It catalyses the reaction D-methionine(out) + ATP + H2O = D-methionine(in) + ADP + phosphate + H(+). In terms of biological role, part of the ABC transporter complex MetNIQ involved in methionine import. Responsible for energy coupling to the transport system. The protein is Methionine import ATP-binding protein MetN 1 of Acinetobacter baylyi (strain ATCC 33305 / BD413 / ADP1).